A 164-amino-acid chain; its full sequence is Kunitz-type proteinase inhibitor BbCI (164 aa).

This sequence belongs to the protease inhibitor I3 (leguminous Kunitz-type inhibitor) family.

The protein localises to the secreted. In terms of biological role, inhibits T.cruzi cruzipain. The chain is Kunitz-type proteinase inhibitor BbCI from Bauhinia bauhinioides (Perlebia bauhinoides).